Here is a 1074-residue protein sequence, read N- to C-terminus: Probable phospholipid-transporting ATPase tat-5 (1074 aa).

The interval 1–26 (MGKRKKNDESSSSSSQKPCVSSSSDD) is disordered. A compositionally biased stretch (low complexity) spans 10-26 (SSSSSSQKPCVSSSSDD). 4 helical membrane passes run 118 to 138 (FVPI…FLLM), 143 to 163 (FIPA…GFVL), 354 to 374 (LTKL…AMKG), and 378 to 398 (LWYR…PISL). Asp-442 (4-aspartylphosphate intermediate) is an active-site residue. Residues Asp-442, Lys-443, Thr-444, Glu-524, Phe-570, Lys-575, Lys-594, Arg-623, Thr-624, Thr-704, Gly-705, Asp-706, Arg-786, and Lys-792 each contribute to the ATP site. A Mg(2+)-binding site is contributed by Asp-442. Residue Thr-444 participates in Mg(2+) binding. Asp-813 is a binding site for Mg(2+). ATP is bound by residues Asn-816 and Asp-817. Asp-817 is a binding site for Mg(2+). Helical transmembrane passes span 886 to 906 (AIFS…VLMV), 954 to 974 (IWVL…LLVF), 978 to 998 (FIHV…IMVA), 1006 to 1026 (WAML…LILF), and 1038 to 1058 (WVFI…LYIV).

This sequence belongs to the cation transport ATPase (P-type) (TC 3.A.3) family. Type IV subfamily. Requires Mg(2+) as cofactor.

The protein resides in the cell membrane. It catalyses the reaction ATP + H2O + phospholipidSide 1 = ADP + phosphate + phospholipidSide 2.. In terms of biological role, plays a role in regulating membrane trafficking of cargo proteins during embryogenesis. Regulates snx-3 retromer-mediated endosomal sorting of mig-14, a transporter of Wnt egl-20 morphogen. Together with mon-2 and pad-1, may participate in the formation of endosomal carriers that direct mig-14 trafficking back to Golgi, away from lysosomal degradation. Required for Wnt egl-20 gradient formation along the anteroposterior body axis and migration of QL neuroblast descendants toward the posterior part. Maintains phosphatidylethanolamine (PE) asymmetry at the cell membrane and prevents the budding of ectosome vesicles that affect intercellular communication and morphogenesis. The protein is Probable phospholipid-transporting ATPase tat-5 (tat-5) of Caenorhabditis elegans.